The chain runs to 408 residues: 3-phosphoshikimate 1-carboxyvinyltransferase (408 aa).

Residues Lys-10, Ser-11, and Arg-15 each coordinate 3-phosphoshikimate. Residue Lys-10 participates in phosphoenolpyruvate binding. Residues Gly-79 and Arg-107 each coordinate phosphoenolpyruvate. Residues Ser-150, Ser-151, Gln-152, Ser-179, Glu-297, and His-324 each coordinate 3-phosphoshikimate. Phosphoenolpyruvate is bound at residue Gln-152. The active-site Proton acceptor is the Glu-297. Phosphoenolpyruvate contacts are provided by Arg-328, Arg-369, and Lys-394.

This sequence belongs to the EPSP synthase family. In terms of assembly, monomer.

It localises to the cytoplasm. It carries out the reaction 3-phosphoshikimate + phosphoenolpyruvate = 5-O-(1-carboxyvinyl)-3-phosphoshikimate + phosphate. The protein operates within metabolic intermediate biosynthesis; chorismate biosynthesis; chorismate from D-erythrose 4-phosphate and phosphoenolpyruvate: step 6/7. Catalyzes the transfer of the enolpyruvyl moiety of phosphoenolpyruvate (PEP) to the 5-hydroxyl of shikimate-3-phosphate (S3P) to produce enolpyruvyl shikimate-3-phosphate and inorganic phosphate. This is 3-phosphoshikimate 1-carboxyvinyltransferase from Corynebacterium efficiens (strain DSM 44549 / YS-314 / AJ 12310 / JCM 11189 / NBRC 100395).